The chain runs to 422 residues: UDP-N-acetylglucosamine 1-carboxyvinyltransferase 2 (422 aa).

Residue 22–23 participates in phosphoenolpyruvate binding; the sequence is KN. R93 contributes to the UDP-N-acetyl-alpha-D-glucosamine binding site. The Proton donor role is filled by C117. A 2-(S-cysteinyl)pyruvic acid O-phosphothioketal modification is found at C117. Residues 122–126, D308, and I330 each bind UDP-N-acetyl-alpha-D-glucosamine; that span reads RPVDL.

It belongs to the EPSP synthase family. MurA subfamily.

The protein resides in the cytoplasm. It carries out the reaction phosphoenolpyruvate + UDP-N-acetyl-alpha-D-glucosamine = UDP-N-acetyl-3-O-(1-carboxyvinyl)-alpha-D-glucosamine + phosphate. It functions in the pathway cell wall biogenesis; peptidoglycan biosynthesis. Functionally, cell wall formation. Adds enolpyruvyl to UDP-N-acetylglucosamine. This Legionella pneumophila (strain Lens) protein is UDP-N-acetylglucosamine 1-carboxyvinyltransferase 2.